Reading from the N-terminus, the 615-residue chain is RNA polymerase sigma factor RpoD (615 aa).

The segment at 166–216 (GYIDPDDGITPPAAEVPPPVDTKTAKADDDSEDEEAEATEDEEEAESGPDP) is disordered. A compositionally biased stretch (acidic residues) spans 194–212 (DDSEDEEAEATEDEEEAES). Residues 381-451 (MVEANLRLVI…TRSIADQART (71 aa)) form a sigma-70 factor domain-2 region. The short motif at 405 to 408 (DLIQ) is the Interaction with polymerase core subunit RpoC element. The interval 460 to 536 (ETINKLNRIS…DSTMQSPIDV (77 aa)) is sigma-70 factor domain-3. Residues 549-602 (VLSGLTAREAKVLRMRFGIDMNTDHTLEEVGKQFDVTRERIRQIEAKALRKLRH) are sigma-70 factor domain-4. A DNA-binding region (H-T-H motif) is located at residues 575 to 594 (LEEVGKQFDVTRERIRQIEA).

It belongs to the sigma-70 factor family. RpoD/SigA subfamily. As to quaternary structure, interacts transiently with the RNA polymerase catalytic core.

The protein resides in the cytoplasm. In terms of biological role, sigma factors are initiation factors that promote the attachment of RNA polymerase to specific initiation sites and are then released. This sigma factor is the primary sigma factor during exponential growth. In Pseudomonas protegens (strain DSM 19095 / LMG 27888 / CFBP 6595 / CHA0), this protein is RNA polymerase sigma factor RpoD.